Reading from the N-terminus, the 52-residue chain is UPF0391 membrane protein Tgr7_2500 (52 aa).

A run of 2 helical transmembrane segments spans residues 4–24 (WALI…SGVA) and 29–49 (WIAQ…LLGG).

The protein belongs to the UPF0391 family.

The protein localises to the cell membrane. The protein is UPF0391 membrane protein Tgr7_2500 of Thioalkalivibrio sulfidiphilus (strain HL-EbGR7).